We begin with the raw amino-acid sequence, 405 residues long: MDMDPWLLLTLILGLAMAWAIGANDAANSMSTAVGAGAITPKQAVLIAGILEFTGAYFFGKTVTETIRKGIIDPSRISDPNVLVYGSLAALLGATIWLVIATKYGLPVSTTHSIIGGIVGYGVVYAGLEIVNWGKMASVVLSWILSPIVGAIFAFFIFKAIRRTVLESEDPIRSAKRWSPVWIGLAFVVIGTMFYIKVLHGKSLYMGVLKLGIPVGLVVFLITSMILRVKFPKVDPYLGAEFIFRRVQVITSGYVALAHGANDVANAIGPVAAVYTIATMGMAGAKVPVPRWILALGGLGIAIGVATYGYRVMETVGKKITELTNTRGFTIDFSAATVVLIASWLGMPISTTHTVVGAVIGVGLARGVKAINKSIVRDIIISWFVTVPVAGLISAIIFKILWIVG.

11 helical membrane-spanning segments follow: residues 3–23 (MDPW…AIGA), 44–64 (AVLI…KTVT), 82–102 (VLVY…VIAT), 114–134 (IIGG…VNWG), 138–158 (SVVL…FFIF), 181–201 (VWIG…VLHG), 207–227 (GVLK…SMIL), 264–284 (VANA…GMAG), 287–307 (VPVP…GVAT), 329–349 (FTID…GMPI), and 384–404 (FVTV…LWIV).

The protein belongs to the inorganic phosphate transporter (PiT) (TC 2.A.20) family.

It localises to the cell membrane. Its function is as follows. Potential transporter for phosphate. This chain is Putative phosphate permease PYRAB14010, found in Pyrococcus abyssi (strain GE5 / Orsay).